A 690-amino-acid polypeptide reads, in one-letter code: eEF1A lysine and N-terminal methyltransferase (690 aa).

Residues 427–451 form a disordered region; that stretch reads AAASSASKKKNKKKAKQPASTGAKD. The span at 433–442 shows a compositional bias: basic residues; sequence SKKKNKKKAK.

This sequence belongs to the methyltransferase superfamily.

The catalysed reaction is L-lysyl-[protein] + S-adenosyl-L-methionine = N(6)-methyl-L-lysyl-[protein] + S-adenosyl-L-homocysteine + H(+). It catalyses the reaction N(6)-methyl-L-lysyl-[protein] + S-adenosyl-L-methionine = N(6),N(6)-dimethyl-L-lysyl-[protein] + S-adenosyl-L-homocysteine + H(+). It carries out the reaction N-terminal glycyl-L-lysyl-L-glutamyl-[protein] + 3 S-adenosyl-L-methionine = N-terminal N,N,N-trimethyl-glycyl-L-lysyl-L-glutamyl-[protein] + 3 S-adenosyl-L-homocysteine + 3 H(+). Dual methyltransferase that catalyzes methylation of elongation factor 1-alpha (eef1a1 and eef1a2) at two different positions, and is therefore involved in the regulation of mRNA translation. Via its C-terminus, methylates the N-terminus of eef1a1 and eef1a2. Via its N-terminus dimethylates lysine residues of eef1a1 and eef1a2. This is eEF1A lysine and N-terminal methyltransferase (mettl13) from Danio rerio (Zebrafish).